The sequence spans 384 residues: 8-amino-7-oxononanoate synthase (384 aa).

Arginine 21 is a binding site for substrate. Pyridoxal 5'-phosphate is bound at residue 108 to 109; sequence GF. Histidine 133 is a binding site for substrate. Residues serine 179, histidine 207, and threonine 233 each contribute to the pyridoxal 5'-phosphate site. Lysine 236 carries the post-translational modification N6-(pyridoxal phosphate)lysine. Threonine 352 contributes to the substrate binding site.

It belongs to the class-II pyridoxal-phosphate-dependent aminotransferase family. BioF subfamily. Homodimer. Requires pyridoxal 5'-phosphate as cofactor.

The enzyme catalyses 6-carboxyhexanoyl-[ACP] + L-alanine + H(+) = (8S)-8-amino-7-oxononanoate + holo-[ACP] + CO2. It functions in the pathway cofactor biosynthesis; biotin biosynthesis. Functionally, catalyzes the decarboxylative condensation of pimeloyl-[acyl-carrier protein] and L-alanine to produce 8-amino-7-oxononanoate (AON), [acyl-carrier protein], and carbon dioxide. The protein is 8-amino-7-oxononanoate synthase of Escherichia coli O6:H1 (strain CFT073 / ATCC 700928 / UPEC).